A 374-amino-acid chain; its full sequence is Beta sliding clamp (374 aa).

It belongs to the beta sliding clamp family. In terms of assembly, forms a ring-shaped head-to-tail homodimer around DNA which binds and tethers DNA polymerases and other proteins to the DNA. The DNA replisome complex has a single clamp-loading complex (3 tau and 1 each of delta, delta', psi and chi subunits) which binds 3 Pol III cores (1 core on the leading strand and 2 on the lagging strand) each with a beta sliding clamp dimer. Additional proteins in the replisome are other copies of gamma, psi and chi, Ssb, DNA helicase and RNA primase.

It localises to the cytoplasm. Functionally, confers DNA tethering and processivity to DNA polymerases and other proteins. Acts as a clamp, forming a ring around DNA (a reaction catalyzed by the clamp-loading complex) which diffuses in an ATP-independent manner freely and bidirectionally along dsDNA. Initially characterized for its ability to contact the catalytic subunit of DNA polymerase III (Pol III), a complex, multichain enzyme responsible for most of the replicative synthesis in bacteria; Pol III exhibits 3'-5' exonuclease proofreading activity. The beta chain is required for initiation of replication as well as for processivity of DNA replication. The sequence is that of Beta sliding clamp (dnaN) from Helicobacter pylori (strain ATCC 700392 / 26695) (Campylobacter pylori).